The following is an 875-amino-acid chain: Neurotrypsin (875 aa).

Residues 1–20 form the signal peptide; that stretch reads MTLARFVLALVLGALPEVVG. Asn-26 carries N-linked (GlcNAc...) asparagine glycosylation. The segment at 29 to 68 is disordered; it reads LHHRHRHSPPPGPQYPYYLPTHQRPPRTRPPPPLPRFSRP. The 73-residue stretch at 93–165 folds into the Kringle domain; it reads CPPGEPWVSV…GKVDWGYCDC (73 aa). 20 cysteine pairs are disulfide-bonded: Cys-93–Cys-165, Cys-109–Cys-149, Cys-138–Cys-163, Cys-195–Cys-259, Cys-208–Cys-269, Cys-239–Cys-249, Cys-305–Cys-369, Cys-318–Cys-379, Cys-349–Cys-359, Cys-412–Cys-475, Cys-425–Cys-485, Cys-455–Cys-465, Cys-525–Cys-589, Cys-538–Cys-599, Cys-569–Cys-579, Cys-619–Cys-750, Cys-661–Cys-677, Cys-765–Cys-831, Cys-794–Cys-808, and Cys-821–Cys-850. 4 SRCR domains span residues 170-271, 280-381, 387-487, and 500-601; these read VRLR…TCSF, IRLV…SCTP, IRLA…ACYP, and VRLM…ICDY. The segment at 619–630 is zymogen activation region; the sequence is CGLRLLHRRQKR. Residues 631–874 form the Peptidase S1 domain; sequence IIGGKNSLRG…FVPWIKSVTK (244 aa). The Charge relay system role is filled by His-676. Asn-683 carries N-linked (GlcNAc...) asparagine glycosylation. Asp-726 acts as the Charge relay system in catalysis. Catalysis depends on Ser-825, which acts as the Charge relay system.

This sequence belongs to the peptidase S1 family.

Its subcellular location is the secreted. Functionally, plays a role in neuronal plasticity and the proteolytic action may subserve structural reorganizations associated with learning and memory operations. This Trachypithecus phayrei (Phayre's leaf monkey) protein is Neurotrypsin (PRSS12).